A 116-amino-acid polypeptide reads, in one-letter code: Fluoride-specific ion channel FluC 1 (116 aa).

A run of 4 helical transmembrane segments spans residues 2–22 (LVLV…RYGI), 33–53 (PLPI…GWIL), 63–83 (IFLG…INEL), and 96–116 (WEYF…GTLI). Na(+)-binding residues include Gly-71 and Thr-74.

This sequence belongs to the fluoride channel Fluc/FEX (TC 1.A.43) family.

The protein resides in the cell membrane. The catalysed reaction is fluoride(in) = fluoride(out). With respect to regulation, na(+) is not transported, but it plays an essential structural role and its presence is essential for fluoride channel function. Its function is as follows. Fluoride-specific ion channel. Important for reducing fluoride concentration in the cell, thus reducing its toxicity. This is Fluoride-specific ion channel FluC 1 from Lactiplantibacillus plantarum (strain ATCC BAA-793 / NCIMB 8826 / WCFS1) (Lactobacillus plantarum).